A 449-amino-acid polypeptide reads, in one-letter code: PC-esterase domain-containing protein 1A (449 aa).

Belongs to the PC-esterase family.

The chain is PC-esterase domain-containing protein 1A (Pced1a) from Mus musculus (Mouse).